Here is a 394-residue protein sequence, read N- to C-terminus: RNA-binding motif protein, X-linked-like-2 (394 aa).

Residues 8–86 (GKLFIGGLNL…KAIKVAQATK (79 aa)) enclose the RRM domain. Positions 67–78 (RDMNGKSLDGKA) are enriched in basic and acidic residues. Residues 67-394 (RDMNGKSLDG…MERGGGRSRY (328 aa)) are disordered. The segment covering 150 to 165 (RGPPPPPRRAGPPPKR) has biased composition (pro residues). Composition is skewed to basic and acidic residues over residues 196–231 (PRRE…REPR) and 239–285 (EYTH…REPF). The span at 321–333 (YSGGRDSYSSSYG) shows a compositional bias: low complexity. 2 stretches are compositionally biased toward basic and acidic residues: residues 334–350 (RSDR…RPDR) and 383–394 (GRMERGGGRSRY).

The protein resides in the nucleus. The sequence is that of RNA-binding motif protein, X-linked-like-2 (RBMXL2) from Macaca fascicularis (Crab-eating macaque).